The primary structure comprises 135 residues: uncharacterized protein (135 aa).

Positions 56 to 135 (VQSHNRGINN…QKGQLKIEKV (80 aa)) are disordered. Basic residues predominate over residues 64-74 (NNRRRDQKRKQ). Positions 77-89 (SIKQDNDLNVSSE) are enriched in polar residues. The span at 108–135 (YKETPDLDEPGSREKRVSQKGQLKIEKV) shows a compositional bias: basic and acidic residues.

This is an uncharacterized protein from Schizosaccharomyces pombe (strain 972 / ATCC 24843) (Fission yeast).